Consider the following 467-residue polypeptide: Probable Xaa-Pro aminopeptidase SMAC_04549 (467 aa).

Residues Asp263, Asp274, Glu397, and Glu437 each contribute to the Mn(2+) site.

Belongs to the peptidase M24B family. Mn(2+) serves as cofactor.

The enzyme catalyses Release of any N-terminal amino acid, including proline, that is linked to proline, even from a dipeptide or tripeptide.. In terms of biological role, catalyzes the removal of a penultimate prolyl residue from the N-termini of peptides. This chain is Probable Xaa-Pro aminopeptidase SMAC_04549, found in Sordaria macrospora (strain ATCC MYA-333 / DSM 997 / K(L3346) / K-hell).